Consider the following 78-residue polypeptide: Small ribosomal subunit protein bS18 (78 aa).

It belongs to the bacterial ribosomal protein bS18 family. Part of the 30S ribosomal subunit. Forms a tight heterodimer with protein bS6.

Binds as a heterodimer with protein bS6 to the central domain of the 16S rRNA, where it helps stabilize the platform of the 30S subunit. The protein is Small ribosomal subunit protein bS18 of Pediococcus pentosaceus (strain ATCC 25745 / CCUG 21536 / LMG 10740 / 183-1w).